Here is a 53-residue protein sequence, read N- to C-terminus: Sec-independent protein translocase protein TatA (53 aa).

A helical transmembrane segment spans residues 1–21; sequence MGMSLSHLLIVLLIIFVLFGA.

It belongs to the TatA/E family. In terms of assembly, the Tat system comprises two distinct complexes: a TatABC complex, containing multiple copies of TatA, TatB and TatC subunits, and a separate TatA complex, containing only TatA subunits. Substrates initially bind to the TatABC complex, which probably triggers association of the separate TatA complex to form the active translocon.

It is found in the cell inner membrane. Its function is as follows. Part of the twin-arginine translocation (Tat) system that transports large folded proteins containing a characteristic twin-arginine motif in their signal peptide across membranes. TatA could form the protein-conducting channel of the Tat system. The polypeptide is Sec-independent protein translocase protein TatA (Rickettsia conorii (strain ATCC VR-613 / Malish 7)).